A 395-amino-acid polypeptide reads, in one-letter code: Ketoisovalerate oxidoreductase subunit VorA (395 aa).

Heterotetramer of one alpha, one beta, one delta and one gamma chain.

It carries out the reaction 3-methyl-2-oxobutanoate + 2 oxidized [2Fe-2S]-[ferredoxin] + CoA = 2-methylpropanoyl-CoA + 2 reduced [2Fe-2S]-[ferredoxin] + CO2 + H(+). In Pyrococcus abyssi (strain GE5 / Orsay), this protein is Ketoisovalerate oxidoreductase subunit VorA (vorA).